The primary structure comprises 104 residues: Complex III assembly factor LYRM7 (104 aa).

At S60 the chain carries Phosphoserine.

Belongs to the complex I LYR family. As to quaternary structure, interacts with UQCRFS1.

Its subcellular location is the mitochondrion matrix. Functionally, assembly factor required for Rieske Fe-S protein UQCRFS1 incorporation into the cytochrome b-c1 (CIII) complex. Functions as a chaperone, binding to this subunit within the mitochondrial matrix and stabilizing it prior to its translocation and insertion into the late CIII dimeric intermediate within the mitochondrial inner membrane. The polypeptide is Complex III assembly factor LYRM7 (Lyrm7) (Rattus norvegicus (Rat)).